We begin with the raw amino-acid sequence, 207 residues long: Protein TEX261 homolog (207 aa).

Helical transmembrane passes span 2 to 22, 54 to 74, 94 to 114, and 126 to 146; these read FLSL…VVCL, IIFL…FSFI, YKFI…FIYF, and IIAI…ISLA.

The protein belongs to the SVP26 family.

The protein resides in the membrane. The chain is Protein TEX261 homolog from Dictyostelium discoideum (Social amoeba).